We begin with the raw amino-acid sequence, 249 residues long: Aquaporin SIP2-1 (249 aa).

2 helical membrane-spanning segments follow: residues 12 to 32 (PWLVVGDLALAAAWVCAGALV) and 53 to 73 (VSLSLVYMFLFAWLEAASGGA). The short motif at 76–78 (NPL) is the NPA 1 element. The next 4 membrane-spanning stretches (helical) occupy residues 104 to 124 (AQVIGAVLGVKLIQVTFPNVG), 133 to 155 (AHHGALAEGLATFMVVMVSVTLK), 176 to 196 (IHLLSSDITGGIMNPASAFAW), and 210 to 230 (LVYWLAPLQATLLGVWAVTFF). The NPA 2 signature appears at 189 to 191 (NPA).

This sequence belongs to the MIP/aquaporin (TC 1.A.8) family. SIP (TC 1.A.8.10) subfamily.

The protein resides in the membrane. Its function is as follows. Aquaporins facilitate the transport of water and small neutral solutes across cell membranes. This is Aquaporin SIP2-1 (SIP2-1) from Zea mays (Maize).